The primary structure comprises 410 residues: Multidrug resistance protein MdtM (410 aa).

At 1–11 (MPRFFTRHAAT) the chain is on the cytoplasmic side. Residues 12 to 32 (LFFPMALILYDFAAYLSTDLI) traverse the membrane as a helical segment. The Periplasmic portion of the chain corresponds to 33–48 (QPGIINVVRDFNADVS). Residues 49-69 (LAPAAVSLYLAGGMALQWLLG) traverse the membrane as a helical segment. The Cytoplasmic portion of the chain corresponds to 70-78 (PLSDRIGRR). Residues 79–99 (PVLITGALIFTLACAATMFTT) form a helical membrane-spanning segment. Over 100–103 (SMTQ) the chain is Periplasmic. A helical transmembrane segment spans residues 104–124 (FLIARAIQGTSICFIATVGYV). At 125–140 (TVQEAFGQTKGIKLMA) the chain is on the cytoplasmic side. Residues 141 to 161 (IITSIVLIAPIIGPLSGAALM) traverse the membrane as a helical segment. The Periplasmic portion of the chain corresponds to 162 to 167 (HFMHWK). A helical transmembrane segment spans residues 168 to 188 (VLFAIIAVMGFISFVGLLLAM). The Cytoplasmic segment spans residues 189–216 (PETVKRGAVPFSAKSVLRDFRNVFCNRL). Residues 217 to 237 (FLFGAATISLSYIPMMSWVAV) traverse the membrane as a helical segment. Residues 238–251 (SPVILIDAGSLTTS) are Periplasmic-facing. Residues 252-272 (QFAWTQVPVFGAVIVANAIVA) form a helical membrane-spanning segment. At 273-282 (RFVKDPTEPR) the chain is on the cytoplasmic side. A helical transmembrane segment spans residues 283 to 303 (FIWRAVPIQLVGLSLLIVGNL). Residues 304–307 (LSPH) are Periplasmic-facing. Residues 308-328 (VWLWSVLGTSLYAFGIGLIFP) form a helical membrane-spanning segment. Over 329 to 348 (TLFRFTLFSNKLPKGTVSAS) the chain is Cytoplasmic. The helical transmembrane segment at 349–369 (LNMVILMVMSVSVEIGRWLWF) threads the bilayer. At 370-373 (NGGR) the chain is on the periplasmic side. A helical membrane pass occupies residues 374–394 (LPFHLLAVVAGVIVVFTLAGL). Residues 395–410 (LNRVRQHQAAELVEEQ) lie on the Cytoplasmic side of the membrane.

It belongs to the major facilitator superfamily. Monomer.

It is found in the cell inner membrane. It catalyses the reaction Na(+)(in) + 2 H(+)(out) = Na(+)(out) + 2 H(+)(in). It carries out the reaction K(+)(in) + H(+)(out) = K(+)(out) + H(+)(in). With respect to regulation, efflux is inhibited by the ionophore carbonyl cyanide 3-chlorophenylhydrazone (CCCP). In terms of biological role, proton-dependent efflux pump. Confers resistance to a broad spectrum of chemically unrelated substrates. Overexpression confers resistance to acriflavine, chloramphenicol, norfloxacin, ethidium bromide and tetraphenylphosphonium bromide (TPP). Can also export a broad range of quaternary ammonium compounds (QACs) and contribute to the intrinsic resistance of E.coli to these antimicrobial compounds. In addition to its role in multidrug resistance, MdtM likely plays a physiological role in alkaline pH homeostasis and in resistance to bile salts. May function in alkaline pH homeostasis when millimolar concentrations of sodium or potassium are present in the growth medium. When overexpressed, can confer a tolerance to alkaline pH values up to 9.75. Probably acts as a low-affinity antiporter that catalyzes the exchange of internal Na(+) and K(+) cations for extracellular protons to maintain a stable internal pH, acid relative to outside, during exposure to alkaline environments. Can also catalyze Rb(+)/H(+) and Li(+)/H(+) antiport, but not Ca(2+)/H(+) exchange. The exact stoichiometry of antiport is unknown. Finally, it could contribute to bile salt resistance by catalyzing the transport of bile salts out of the cell cytoplasm. Mediates a bile salt/H(+) exchange driven by the electrochemical gradient. Binds to cholate and deoxycholate with micromolar affinity and catalyzes both cholate/H(+) and deoxycholate/H(+) exchange reactions. This is Multidrug resistance protein MdtM from Escherichia coli (strain K12).